Consider the following 273-residue polypeptide: Hydroxyethylthiazole kinase (273 aa).

Met47 contributes to the substrate binding site. Positions 123 and 172 each coordinate ATP. Substrate is bound at residue Gly199.

The protein belongs to the Thz kinase family. The cofactor is Mg(2+).

It carries out the reaction 5-(2-hydroxyethyl)-4-methylthiazole + ATP = 4-methyl-5-(2-phosphooxyethyl)-thiazole + ADP + H(+). It functions in the pathway cofactor biosynthesis; thiamine diphosphate biosynthesis; 4-methyl-5-(2-phosphoethyl)-thiazole from 5-(2-hydroxyethyl)-4-methylthiazole: step 1/1. Functionally, catalyzes the phosphorylation of the hydroxyl group of 4-methyl-5-beta-hydroxyethylthiazole (THZ). This is Hydroxyethylthiazole kinase from Ruminiclostridium cellulolyticum (strain ATCC 35319 / DSM 5812 / JCM 6584 / H10) (Clostridium cellulolyticum).